Consider the following 1093-residue polypeptide: Mediator of RNA polymerase II transcription subunit 14 (1093 aa).

2 disordered regions span residues 1–62 (MPGV…IDGH) and 1034–1065 (ETKSEQDYSTQPAPENQSQTGAPSQAGMANDT). Residues 19-31 (DTQTPSNGDNLRN) show a composition bias toward polar residues. Residues 41–62 (KGDKDHDPDKESYAGKPRIDGH) are compositionally biased toward basic and acidic residues. Over residues 1040–1056 (DYSTQPAPENQSQTGAP) the composition is skewed to polar residues.

It belongs to the Mediator complex subunit 14 family. As to quaternary structure, component of the Mediator complex.

Its subcellular location is the nucleus. Component of the Mediator complex, a coactivator involved in the regulated transcription of nearly all RNA polymerase II-dependent genes. Mediator functions as a bridge to convey information from gene-specific regulatory proteins to the basal RNA polymerase II transcription machinery. Mediator is recruited to promoters by direct interactions with regulatory proteins and serves as a scaffold for the assembly of a functional preinitiation complex with RNA polymerase II and the general transcription factors. This chain is Mediator of RNA polymerase II transcription subunit 14 (rgr1), found in Aspergillus fumigatus (strain ATCC MYA-4609 / CBS 101355 / FGSC A1100 / Af293) (Neosartorya fumigata).